Consider the following 396-residue polypeptide: Serine/threonine-protein kinase VRK1 (396 aa).

The 281-residue stretch at 37 to 317 (WKVGLPIGQG…LLDYTEKPLY (281 aa)) folds into the Protein kinase domain. Residues 43–51 (IGQGGFGCI) and Lys71 contribute to the ATP site. Lys71 participates in a covalent cross-link: Glycyl lysine isopeptide (Lys-Gly) (interchain with G-Cter in SUMO2). The active-site Proton acceptor is Asp177. The residue at position 342 (Ser342) is a Phosphoserine; by PLK3. Residues 354-396 (ITKKRKKEIEESKEPGVEDTEWSNTQTEEAIQTRSRTRKRVQK) form a disordered region. Thr355 carries the phosphothreonine; by autocatalysis modification. The span at 360 to 369 (KEIEESKEPG) shows a compositional bias: basic and acidic residues. Residues 375-387 (WSNTQTEEAIQTR) show a composition bias toward polar residues. At Ser376 the chain carries Phosphoserine. Thr378 bears the Phosphothreonine mark. Residues 387–393 (RSRTRKR) form a required for interaction with the nucleosome region.

It belongs to the protein kinase superfamily. CK1 Ser/Thr protein kinase family. VRK subfamily. As to quaternary structure, interacts with HDAC1, KAT2B, SETDB1, KDM3A and KDM4A. Associates with the nucleosome through interactions with nucleosome DNA, histone H2A and histone H2B; the interaction with H2A and H2B is mediated by the nucleosome acidic patch, a cluster of negatively charged residues of H2A and H2B forming a cleft within the nucleosome core. In terms of assembly, (Microbial infection) Interacts with vaccinia protein B12; this interaction inhibits the repressive activity of the vaccinia virus B12 pseudokinase on viral replication factory formation. Autophosphorylated at various serine and threonine residues. Autophosphorylation does not impair its ability to phosphorylate p53/TP53. Phosphorylation by PLK3 leads to induction of Golgi fragmentation during mitosis. In terms of tissue distribution, widely expressed. Highly expressed in fetal liver, testis and thymus.

Its subcellular location is the nucleus. The protein resides in the cytoplasm. It localises to the cajal body. It carries out the reaction L-seryl-[protein] + ATP = O-phospho-L-seryl-[protein] + ADP + H(+). The enzyme catalyses L-threonyl-[protein] + ATP = O-phospho-L-threonyl-[protein] + ADP + H(+). With respect to regulation, active in presence of Mn(2+), Mg(2+) and Zn(2+), but is not functional with Ca(2+) or Cu(2+). Has a higher affinity for Mn(2+) than for Mg(2+). RAN inhibits its autophosphorylation and its ability to phosphorylate histone H3. Functionally, serine/threonine kinase involved in the regulation of key cellular processes including the cell cycle, nuclear condensation, transcription regulation, and DNA damage response. Controls chromatin organization and remodeling by mediating phosphorylation of histone H3 on 'Thr-4' and histone H2AX (H2aXT4ph). It also phosphorylates KAT5 in response to DNA damage, promoting KAT5 association with chromatin and histone acetyltransferase activity. Is involved in the regulation of cell cycle progression of neural progenitors, and is required for proper cortical neuronal migration. Is involved in neurite elongation and branching in motor neurons, and has an essential role in Cajal bodies assembly, acting through COIL phosphorylation and the control of coilin degradation. Involved in Golgi disassembly during the cell cycle: following phosphorylation by PLK3 during mitosis, it is required to induce Golgi fragmentation. Phosphorylates BANF1: disrupts its ability to bind DNA, reduces its binding to LEM domain-containing proteins and causes its relocalization from the nucleus to the cytoplasm. Phosphorylates TP53BP1 and p53/TP53 on 'Thr-18', preventing the interaction between p53/TP53 and MDM2. Phosphorylates ATF2 which activates its transcriptional activity. Phosphorylates JUN. The protein is Serine/threonine-protein kinase VRK1 of Homo sapiens (Human).